The sequence spans 157 residues: 2-C-methyl-D-erythritol 2,4-cyclodiphosphate synthase (157 aa).

The a divalent metal cation site is built by D8 and H10. 4-CDP-2-C-methyl-D-erythritol 2-phosphate is bound by residues 8 to 10 (DVH) and 34 to 35 (HS). An a divalent metal cation-binding site is contributed by H42. Residues 56-58 (DIG), 61-65 (FPDTD), 100-106 (AQAPKMA), 132-135 (TTTE), F139, and R142 contribute to the 4-CDP-2-C-methyl-D-erythritol 2-phosphate site.

The protein belongs to the IspF family. As to quaternary structure, homotrimer. Requires a divalent metal cation as cofactor.

The enzyme catalyses 4-CDP-2-C-methyl-D-erythritol 2-phosphate = 2-C-methyl-D-erythritol 2,4-cyclic diphosphate + CMP. It functions in the pathway isoprenoid biosynthesis; isopentenyl diphosphate biosynthesis via DXP pathway; isopentenyl diphosphate from 1-deoxy-D-xylulose 5-phosphate: step 4/6. Functionally, involved in the biosynthesis of isopentenyl diphosphate (IPP) and dimethylallyl diphosphate (DMAPP), two major building blocks of isoprenoid compounds. Catalyzes the conversion of 4-diphosphocytidyl-2-C-methyl-D-erythritol 2-phosphate (CDP-ME2P) to 2-C-methyl-D-erythritol 2,4-cyclodiphosphate (ME-CPP) with a corresponding release of cytidine 5-monophosphate (CMP). This Pseudomonas aeruginosa (strain ATCC 15692 / DSM 22644 / CIP 104116 / JCM 14847 / LMG 12228 / 1C / PRS 101 / PAO1) protein is 2-C-methyl-D-erythritol 2,4-cyclodiphosphate synthase.